Consider the following 145-residue polypeptide: Arginine repressor (145 aa).

It belongs to the ArgR family.

It is found in the cytoplasm. Its pathway is amino-acid biosynthesis; L-arginine biosynthesis [regulation]. In terms of biological role, regulates arginine biosynthesis genes. This Streptococcus pyogenes serotype M3 (strain ATCC BAA-595 / MGAS315) protein is Arginine repressor.